The chain runs to 463 residues: NADH-quinone oxidoreductase subunit N (463 aa).

14 helical membrane passes run 5–25 (LLYGLLPEHILLGLILVLMLL), 34–54 (AGSALFIASLLAGAGVLVMQL), 72–92 (FSEIGRLIIVSCGAILGVYSL), 99–119 (KYWILIASSLLGAMIILDSAG), 120–140 (FISLFMGIEILSLPGFALMVL), 154–174 (YLLLSSVATALVLFGLSLVYG), 196–216 (LAASVMILSGFFLKASVFPFH), 230–250 (VTAFLASIVKAAVVLGLVRIL), 259–279 (AVTVIALLSMLSMFYGNITAI), 286–303 (KMLAYSSISHAGYMMFAL), 314–334 (LLYYVAVYAVTTITACACFSI), 356–376 (AILLSLCVLSLAGIPPLPGFL), 393–413 (VAVLAFVASYIGTFFYLGVVL), and 432–452 (LCWTWGGALLGTLALALFMLL).

Belongs to the complex I subunit 2 family. As to quaternary structure, NDH-1 is composed of 14 different subunits. Subunits NuoA, H, J, K, L, M, N constitute the membrane sector of the complex.

Its subcellular location is the cell inner membrane. The enzyme catalyses a quinone + NADH + 5 H(+)(in) = a quinol + NAD(+) + 4 H(+)(out). Its function is as follows. NDH-1 shuttles electrons from NADH, via FMN and iron-sulfur (Fe-S) centers, to quinones in the respiratory chain. The immediate electron acceptor for the enzyme in this species is believed to be ubiquinone. Couples the redox reaction to proton translocation (for every two electrons transferred, four hydrogen ions are translocated across the cytoplasmic membrane), and thus conserves the redox energy in a proton gradient. In Pelobacter propionicus (strain DSM 2379 / NBRC 103807 / OttBd1), this protein is NADH-quinone oxidoreductase subunit N.